A 449-amino-acid chain; its full sequence is 23S rRNA (uracil(1939)-C(5))-methyltransferase RlmD (449 aa).

One can recognise a TRAM domain in the interval 1 to 66 (MGRSRHHNKL…AKFDEAKVVE (66 aa)). 4 residues coordinate [4Fe-4S] cluster: C79, C85, C88, and C169. Positions 280, 309, 314, 330, 357, and 379 each coordinate S-adenosyl-L-methionine. The active-site Nucleophile is the C405.

Belongs to the class I-like SAM-binding methyltransferase superfamily. RNA M5U methyltransferase family. RlmD subfamily.

The enzyme catalyses uridine(1939) in 23S rRNA + S-adenosyl-L-methionine = 5-methyluridine(1939) in 23S rRNA + S-adenosyl-L-homocysteine + H(+). Catalyzes the formation of 5-methyl-uridine at position 1939 (m5U1939) in 23S rRNA. In Francisella tularensis subsp. tularensis (strain FSC 198), this protein is 23S rRNA (uracil(1939)-C(5))-methyltransferase RlmD.